Consider the following 359-residue polypeptide: Histidinol-phosphate aminotransferase 1 (359 aa).

Lys216 is modified (N6-(pyridoxal phosphate)lysine).

Belongs to the class-II pyridoxal-phosphate-dependent aminotransferase family. Histidinol-phosphate aminotransferase subfamily. As to quaternary structure, homodimer. Pyridoxal 5'-phosphate serves as cofactor.

It carries out the reaction L-histidinol phosphate + 2-oxoglutarate = 3-(imidazol-4-yl)-2-oxopropyl phosphate + L-glutamate. It functions in the pathway amino-acid biosynthesis; L-histidine biosynthesis; L-histidine from 5-phospho-alpha-D-ribose 1-diphosphate: step 7/9. The protein is Histidinol-phosphate aminotransferase 1 (hisC1) of Caulobacter vibrioides (strain ATCC 19089 / CIP 103742 / CB 15) (Caulobacter crescentus).